A 337-amino-acid polypeptide reads, in one-letter code: GTP 3',8-cyclase (337 aa).

A Radical SAM core domain is found at 17–242 (TFQREYYYLR…RQKDRTDGPA (226 aa)). R26 contacts GTP. [4Fe-4S] cluster-binding residues include C33 and C37. Y39 serves as a coordination point for S-adenosyl-L-methionine. C40 serves as a coordination point for [4Fe-4S] cluster. R76 lines the GTP pocket. G80 provides a ligand contact to S-adenosyl-L-methionine. Residue T107 coordinates GTP. S131 lines the S-adenosyl-L-methionine pocket. GTP is bound at residue K168. S-adenosyl-L-methionine is bound at residue M202. [4Fe-4S] cluster is bound by residues C265 and C268. GTP is bound at residue 270–272 (RLR). C282 is a binding site for [4Fe-4S] cluster.

The protein belongs to the radical SAM superfamily. MoaA family. As to quaternary structure, monomer and homodimer. The cofactor is [4Fe-4S] cluster.

The catalysed reaction is GTP + AH2 + S-adenosyl-L-methionine = (8S)-3',8-cyclo-7,8-dihydroguanosine 5'-triphosphate + 5'-deoxyadenosine + L-methionine + A + H(+). Its pathway is cofactor biosynthesis; molybdopterin biosynthesis. In terms of biological role, catalyzes the cyclization of GTP to (8S)-3',8-cyclo-7,8-dihydroguanosine 5'-triphosphate. The chain is GTP 3',8-cyclase from Mannheimia succiniciproducens (strain KCTC 0769BP / MBEL55E).